Here is a 609-residue protein sequence, read N- to C-terminus: Glutamine--fructose-6-phosphate aminotransferase [isomerizing] (609 aa).

Cys-2 functions as the Nucleophile; for GATase activity in the catalytic mechanism. A Glutamine amidotransferase type-2 domain is found at 2-218; the sequence is CGIVGAVAQR…EGDIAEVTRR (217 aa). 2 SIS domains span residues 286 to 426 and 458 to 599; these read AAKL…LKGV and LAED…VDQP. Lys-604 functions as the For Fru-6P isomerization activity in the catalytic mechanism.

Homodimer.

It is found in the cytoplasm. It catalyses the reaction D-fructose 6-phosphate + L-glutamine = D-glucosamine 6-phosphate + L-glutamate. In terms of biological role, catalyzes the first step in hexosamine metabolism, converting fructose-6P into glucosamine-6P using glutamine as a nitrogen source. The protein is Glutamine--fructose-6-phosphate aminotransferase [isomerizing] of Photorhabdus laumondii subsp. laumondii (strain DSM 15139 / CIP 105565 / TT01) (Photorhabdus luminescens subsp. laumondii).